The primary structure comprises 407 residues: Phosphopentomutase (407 aa).

The Mn(2+) site is built by aspartate 10, aspartate 306, histidine 311, aspartate 347, histidine 348, and histidine 359.

It belongs to the phosphopentomutase family. Requires Mn(2+) as cofactor.

It localises to the cytoplasm. The catalysed reaction is 2-deoxy-alpha-D-ribose 1-phosphate = 2-deoxy-D-ribose 5-phosphate. The enzyme catalyses alpha-D-ribose 1-phosphate = D-ribose 5-phosphate. The protein operates within carbohydrate degradation; 2-deoxy-D-ribose 1-phosphate degradation; D-glyceraldehyde 3-phosphate and acetaldehyde from 2-deoxy-alpha-D-ribose 1-phosphate: step 1/2. Functionally, isomerase that catalyzes the conversion of deoxy-ribose 1-phosphate (dRib-1-P) and ribose 1-phosphate (Rib-1-P) to deoxy-ribose 5-phosphate (dRib-5-P) and ribose 5-phosphate (Rib-5-P), respectively. The protein is Phosphopentomutase of Salmonella arizonae (strain ATCC BAA-731 / CDC346-86 / RSK2980).